A 583-amino-acid chain; its full sequence is 2-succinyl-5-enolpyruvyl-6-hydroxy-3-cyclohexene-1-carboxylate synthase (583 aa).

The protein belongs to the TPP enzyme family. MenD subfamily. As to quaternary structure, homodimer. It depends on Mg(2+) as a cofactor. Mn(2+) is required as a cofactor. Requires thiamine diphosphate as cofactor.

It catalyses the reaction isochorismate + 2-oxoglutarate + H(+) = 5-enolpyruvoyl-6-hydroxy-2-succinyl-cyclohex-3-ene-1-carboxylate + CO2. The protein operates within quinol/quinone metabolism; 1,4-dihydroxy-2-naphthoate biosynthesis; 1,4-dihydroxy-2-naphthoate from chorismate: step 2/7. It functions in the pathway cofactor biosynthesis; phylloquinone biosynthesis. Its function is as follows. Catalyzes the thiamine diphosphate-dependent decarboxylation of 2-oxoglutarate and the subsequent addition of the resulting succinic semialdehyde-thiamine pyrophosphate anion to isochorismate to yield 2-succinyl-5-enolpyruvyl-6-hydroxy-3-cyclohexene-1-carboxylate (SEPHCHC). The polypeptide is 2-succinyl-5-enolpyruvyl-6-hydroxy-3-cyclohexene-1-carboxylate synthase (Nostoc sp. (strain PCC 7120 / SAG 25.82 / UTEX 2576)).